Here is a 352-residue protein sequence, read N- to C-terminus: tRNA pseudouridine synthase D (352 aa).

Aspartate 81 serves as the catalytic Nucleophile. The TRUD domain maps to glycine 157–leucine 303.

Belongs to the pseudouridine synthase TruD family.

It catalyses the reaction uridine(13) in tRNA = pseudouridine(13) in tRNA. Responsible for synthesis of pseudouridine from uracil-13 in transfer RNAs. The polypeptide is tRNA pseudouridine synthase D (Pseudomonas putida (strain ATCC 47054 / DSM 6125 / CFBP 8728 / NCIMB 11950 / KT2440)).